The primary structure comprises 497 residues: Serine/threonine-protein phosphatase 2A 56 kDa regulatory subunit beta isoform (497 aa).

Positions 1–19 (METKLPPASTPTSPSSPGL) are enriched in low complexity. Disordered stretches follow at residues 1-55 (METK…YQSN) and 473-497 (QGTQ…GGQS). Residues Ser32, Ser35, Ser44, Ser46, Ser47, and Ser48 each carry the phosphoserine modification. Residues 34 to 45 (RSLRRARPRRSH) show a composition bias toward basic residues.

The protein belongs to the phosphatase 2A regulatory subunit B56 family. In terms of assembly, component of the serine/threonine-protein phosphatase 2A complex (PP2A). This complex consists of a common heterodimeric core enzyme, composed of a 36 kDa catalytic subunit (subunit C) and a 65 kDa constant scaffold subunit (PR65 or subunit A), that associates with a variety of regulatory subunits. Proteins that associate with the core dimer include three families of regulatory subunits B (the R2/B/PR55/B55, R3/B''/PR72/PR130/PR59 and R5/B'/B56 families), the 48 kDa variable regulatory subunit, viral proteins, and cell signaling molecules. Interacts with SGO1. Interacts with AKT1. Ubiquitinated by CUL3-KLHL15 complex; this modification leads to proteasomal degradation.

It localises to the cytoplasm. In terms of biological role, as the regulatory component of the serine/threonine-protein phosphatase 2A (PP2A) holoenzyme, modulates substrate specificity, subcellular localization, and responsiveness to phosphorylation. The phosphorylated form mediates the interaction between PP2A and AKT1, leading to AKT1 dephosphorylation. In Mus musculus (Mouse), this protein is Serine/threonine-protein phosphatase 2A 56 kDa regulatory subunit beta isoform (Ppp2r5b).